The sequence spans 598 residues: Probable ATP-dependent RNA helicase DDX52 (598 aa).

At Lys-15 the chain carries N6-acetyllysine. Ser-39 is subject to Phosphoserine. The interval 59–98 (CGGLQTQQELQNEETTEGGLLERSKEPKKKKRKKMTADVP) is disordered. The short motif at 166 to 194 (QLDQEYKISPRLLQNILDAGFQVPTPIQM) is the Q motif element. In terms of domain architecture, Helicase ATP-binding spans 197 to 375 (IPVMLHGREL…KLNLDNIVSV (179 aa)). An ATP-binding site is contributed by 210 to 217 (APTGSGKT). Residues 319–322 (DESD) carry the DEAD box motif. The Helicase C-terminal domain occupies 386-547 (TVEQELLFVG…PVPEYIKGFQ (162 aa)). Residues 578 to 598 (AKQKKVAGQNSKKKETLKGKS) are disordered. Basic and acidic residues predominate over residues 589–598 (KKKETLKGKS).

It belongs to the DEAD box helicase family. DDX52/ROK1 subfamily.

The protein resides in the nucleus. The protein localises to the nucleolus. The enzyme catalyses ATP + H2O = ADP + phosphate + H(+). Functionally, required for efficient ribosome biogenesis. May control cell cycle progression by regulating translation of mRNAs that contain a terminal oligo pyrimidine (TOP) motif in their 5' UTRs, such as GTPBP4. The polypeptide is Probable ATP-dependent RNA helicase DDX52 (Ddx52) (Rattus norvegicus (Rat)).